The sequence spans 309 residues: 4-diphosphocytidyl-2-C-methyl-D-erythritol kinase (309 aa).

The active site involves lysine 28. Position 120–130 (120–130 (PSQAGMGGGSS)) interacts with ATP. Aspartate 162 is an active-site residue.

It belongs to the GHMP kinase family. IspE subfamily.

It catalyses the reaction 4-CDP-2-C-methyl-D-erythritol + ATP = 4-CDP-2-C-methyl-D-erythritol 2-phosphate + ADP + H(+). It functions in the pathway isoprenoid biosynthesis; isopentenyl diphosphate biosynthesis via DXP pathway; isopentenyl diphosphate from 1-deoxy-D-xylulose 5-phosphate: step 3/6. Catalyzes the phosphorylation of the position 2 hydroxy group of 4-diphosphocytidyl-2C-methyl-D-erythritol. This is 4-diphosphocytidyl-2-C-methyl-D-erythritol kinase from Polaromonas sp. (strain JS666 / ATCC BAA-500).